We begin with the raw amino-acid sequence, 243 residues long: Adenylate dimethylallyltransferase (243 aa).

The catalysed reaction is dimethylallyl diphosphate + AMP = N(6)-(dimethylallyl)adenosine 5'-phosphate + diphosphate. Transfers dimethylallyl groups to AMP as part of the biosynthesis of cytokinin phytohormones. The sequence is that of Adenylate dimethylallyltransferase (tzs) from Agrobacterium fabrum (strain C58 / ATCC 33970) (Agrobacterium tumefaciens (strain C58)).